The chain runs to 391 residues: Shewanella-like protein phosphatase 2 (391 aa).

The Mn(2+) site is built by D61, H63, D97, and N132. H133 acts as the Proton donor in catalysis. Residues H232 and H295 each contribute to the Mn(2+) site.

It belongs to the metallophosphoesterase superfamily. SLP family. The cofactor is Mn(2+). In terms of tissue distribution, expressed in roots and siliques (at protein level).

The protein localises to the cytoplasm. It is found in the cytosol. Functionally, shows phosphatase activity, hydrolyzing the artificial substrate para-nitrophenylphosphate (pNPP) in vitro. This Arabidopsis thaliana (Mouse-ear cress) protein is Shewanella-like protein phosphatase 2.